Here is a 307-residue protein sequence, read N- to C-terminus: Ribosomal protein L11 methyltransferase (307 aa).

4 residues coordinate S-adenosyl-L-methionine: threonine 162, glycine 183, aspartate 205, and asparagine 244.

Belongs to the methyltransferase superfamily. PrmA family.

It localises to the cytoplasm. It catalyses the reaction L-lysyl-[protein] + 3 S-adenosyl-L-methionine = N(6),N(6),N(6)-trimethyl-L-lysyl-[protein] + 3 S-adenosyl-L-homocysteine + 3 H(+). Methylates ribosomal protein L11. This chain is Ribosomal protein L11 methyltransferase, found in Bordetella parapertussis (strain 12822 / ATCC BAA-587 / NCTC 13253).